Consider the following 312-residue polypeptide: Homoserine O-acetyltransferase (312 aa).

C142 acts as the Acyl-thioester intermediate in catalysis. Residues K163 and S192 each coordinate substrate. H235 (proton acceptor) is an active-site residue. Residue E237 is part of the active site. Position 249 (R249) interacts with substrate.

The protein belongs to the MetA family.

The protein localises to the cytoplasm. It catalyses the reaction L-homoserine + acetyl-CoA = O-acetyl-L-homoserine + CoA. It participates in amino-acid biosynthesis; L-methionine biosynthesis via de novo pathway; O-acetyl-L-homoserine from L-homoserine: step 1/1. Transfers an acetyl group from acetyl-CoA to L-homoserine, forming acetyl-L-homoserine. The sequence is that of Homoserine O-acetyltransferase from Ruegeria sp. (strain TM1040) (Silicibacter sp.).